The primary structure comprises 730 residues: MKTKTYNFRYIVASVLTLLMNGSSAATPPNSNSSSSCNRTFGGISIPFPFGIGGKDCYLNSWYEVVCNSTTSGSCKTVPFLTRINREVVNISLPKSDFFSPYGVVHIKGPVTSLGCSSNISQGLQKTLPDLNITGRGSPYFLTDENRLVAVGCGTKALMTDIESEILGCESSCKDTKSNEVGNSLCNGYKCCQARLPVERPQAVGVNIESNNDTRGEGCKAAFLTSMKYFPSNITKPEWFQADGYAVVELGWYFDTSDSRFRNPLGCTNLTRSSGSYFLTDICLCRYGYFSRMSYRSCYCGSGYRGNPYIRGGCIDIDECEVPNKCGEDTCVNMAGRYSCVPKITKPAKLAHVLRGVLIGLLGLLFFVIGIFGLYKFIRKRRRIIRSMKFFKRNGGLLLKQQLTTKDGSVEMSKIFSSRELEKATDNFSIDRVLGQGGQGTVYKRMLVDGSIVAVKRSKVVDEDKMEEFINEIVLLSQINHRNIVKLLGCCLETEVPILVYEYIPNGDLFKRLHDEYDDYMMTWEVRLRIAVEIAGALSYMHSAASFPIFHRDIKTTNILLDEKYRAKISDFGTSRSVATDQTHLTTLVAGTFGYMDPEYFLSSQYTHKSDVYSFGVVLVELITGEKPMSRVRSEEGIGLATYFLEAMKENRAVDIIDIRIKDESKQVMAVAKLARRCLNRKGNKRPNMREVSIKLERIRSSPKDLDVHTENEEEEEEDQLMEINRIYDS.

The signal sequence occupies residues 1–25 (MKTKTYNFRYIVASVLTLLMNGSSA). At 26 to 357 (ATPPNSNSSS…AKLAHVLRGV (332 aa)) the chain is on the extracellular side. N-linked (GlcNAc...) asparagine glycans are attached at residues Asn-32, Asn-38, Asn-68, Asn-90, Asn-119, Asn-132, Asn-212, Asn-233, and Asn-269. Residues 283 to 340 (CLCRYGYFSRMSYRSCYCGSGYRGNPYIRGGCIDIDECEVPNKCGEDTCVNMAGRYSC) are atypical EGF-like. Cystine bridges form between Cys-285–Cys-298, Cys-320–Cys-331, and Cys-326–Cys-340. A helical membrane pass occupies residues 358–378 (LIGLLGLLFFVIGIFGLYKFI). The Cytoplasmic portion of the chain corresponds to 379–730 (RKRRRIIRSM…LMEINRIYDS (352 aa)). One can recognise a Protein kinase domain in the interval 428-699 (FSIDRVLGQG…REVSIKLERI (272 aa)). Residues 434–442 (LGQGGQGTV) and Lys-456 each bind ATP. The active-site Proton acceptor is the Asp-553. A disordered region spans residues 703–730 (PKDLDVHTENEEEEEEDQLMEINRIYDS). Positions 712–721 (NEEEEEEDQL) are enriched in acidic residues.

It belongs to the protein kinase superfamily. Ser/Thr protein kinase family. Preferentially expressed in roots and flowers.

The protein localises to the membrane. The catalysed reaction is L-seryl-[protein] + ATP = O-phospho-L-seryl-[protein] + ADP + H(+). It carries out the reaction L-threonyl-[protein] + ATP = O-phospho-L-threonyl-[protein] + ADP + H(+). Serine/threonine-protein kinase that may function as a signaling receptor of extracellular matrix component. This is Wall-associated receptor kinase-like 3 (WAKL3) from Arabidopsis thaliana (Mouse-ear cress).